The following is a 775-amino-acid chain: Probable ubiquitin carboxyl-terminal hydrolase creB (775 aa).

The tract at residues M1–P45 is disordered. Over residues L36–P45 the composition is skewed to basic and acidic residues. Residues Y55–T468 form the USP domain. The Nucleophile role is filled by C64. Disordered stretches follow at residues E113–E146 and A238–N269. Residues S256–N269 show a composition bias toward polar residues. H419 (proton acceptor) is an active-site residue. The interval L496 to S775 is disordered. 2 stretches are compositionally biased toward low complexity: residues E546–S566 and E576–P585. Residues K586–L653 adopt a coiled-coil conformation. Residues A589–Q662 show a composition bias toward basic and acidic residues. Residues R668–R679 show a composition bias toward basic residues. A compositionally biased stretch (low complexity) spans S705–N725. Basic and acidic residues predominate over residues T739–G757. A compositionally biased stretch (basic residues) spans H758–S775.

The protein belongs to the peptidase C19 family. Interacts with creA, creC and qutD.

It catalyses the reaction Thiol-dependent hydrolysis of ester, thioester, amide, peptide and isopeptide bonds formed by the C-terminal Gly of ubiquitin (a 76-residue protein attached to proteins as an intracellular targeting signal).. In terms of biological role, ubiquitin thioesterase component of the regulatory network controlling carbon source utilization through ubiquitination and deubiquitination involving creA, creB, creC, creD and acrB. Deubiquitinates the creA catabolic repressor and the quinate permease qutD. Also plays a role in response to carbon starvation and the control of extracellular proteases activity. The protein is Probable ubiquitin carboxyl-terminal hydrolase creB (creB) of Aspergillus fumigatus (strain ATCC MYA-4609 / CBS 101355 / FGSC A1100 / Af293) (Neosartorya fumigata).